Consider the following 114-residue polypeptide: Protein ORF3 (114 aa).

2 hydrophobic regions span residues 6 to 22 (CALGLFCCCSSCFCLCC) and 33 to 53 (AVVGGAAAVPAVVSGVTGLIL). The interval 28–68 (VSRLAAVVGGAAAVPAVVSGVTGLILSPSQSPIFIQPTPLP) is interaction with host HPX. A homodimerization, and interaction with host AMBP/bikunin region spans residues 72–114 (PLRPGLDLAFANQPGHLAPLGEIRPSAPPLPPVADLPQPGLRR). The segment at 91-114 (LGEIRPSAPPLPPVADLPQPGLRR) is disordered. The segment at 95-104 (RPSAPPLPPV) is interaction with host SRC, HCK, FYN, PIK3R3 and GRB2. Residues 96-99 (PSAP) carry the PTAP/PSAP motif motif.

The protein belongs to the hepevirus ORF3 protein family. As to quaternary structure, forms homooligomers. Interacts with host SRC, HCK, FYN, PIK3R3 and GRB2 (via SH3 domain); binding does not activate the kinases. Interacts with host AMBP/bikunin and AMBP/alpha-1-microglobulin peptides. Interacts with host HPX/hemopexin. Interacts (when phosphorylated) with capsid protein ORF2. Interacts with host TSG101; this interaction plays a role in viral release from the host cell. Interacts with host SIRPA; this interaction down-regulates the phosphorylation of host IRF3. In terms of processing, palmitoylated in the N-terminus.

It localises to the host endoplasmic reticulum membrane. The protein resides in the host cytoplasm. The protein localises to the host cytoskeleton. It is found in the virion. Its subcellular location is the host cell membrane. Functionally, small multifunctional phosphoprotein involved in virion morphogenesis, egress and counteracting host innate immunity. Plays critical roles in the final steps of viral release by interacting with host TSG101, a member of the vacuolar protein-sorting pathway and using other cellular host proteins involved in vesicle formation pathway. Also acts as a viroporin and forms ion conductive pores allowing viral particle release. Impairs the generation of type I interferon by down-regulating host TLR3 and TLR7 as well as their downstream signaling pathways. Down-regulates the phosphorylation of host IRF3 via the interaction with host SIRP-alpha, thereby inhibiting IFN-I expression. Interacts with host microtubules. This Hepatitis E virus genotype 2 (isolate Human/Mexico) (HEV-2) protein is Protein ORF3.